The following is a 518-amino-acid chain: Glutamate--cysteine ligase (518 aa).

It belongs to the glutamate--cysteine ligase type 1 family. Type 1 subfamily.

The catalysed reaction is L-cysteine + L-glutamate + ATP = gamma-L-glutamyl-L-cysteine + ADP + phosphate + H(+). The protein operates within sulfur metabolism; glutathione biosynthesis; glutathione from L-cysteine and L-glutamate: step 1/2. The polypeptide is Glutamate--cysteine ligase (Citrobacter koseri (strain ATCC BAA-895 / CDC 4225-83 / SGSC4696)).